A 472-amino-acid chain; its full sequence is Kynureninase 2 (472 aa).

Pyridoxal 5'-phosphate contacts are provided by residues Leu-133, Thr-134, 162-165 (FPSD), Asp-247, His-250, and Tyr-272. The residue at position 273 (Lys-273) is an N6-(pyridoxal phosphate)lysine. Positions 314 and 342 each coordinate pyridoxal 5'-phosphate.

Belongs to the kynureninase family. In terms of assembly, homodimer. It depends on pyridoxal 5'-phosphate as a cofactor.

The protein localises to the cytoplasm. It catalyses the reaction L-kynurenine + H2O = anthranilate + L-alanine + H(+). The enzyme catalyses 3-hydroxy-L-kynurenine + H2O = 3-hydroxyanthranilate + L-alanine + H(+). Its pathway is amino-acid degradation; L-kynurenine degradation; L-alanine and anthranilate from L-kynurenine: step 1/1. It functions in the pathway cofactor biosynthesis; NAD(+) biosynthesis; quinolinate from L-kynurenine: step 2/3. Functionally, catalyzes the cleavage of L-kynurenine (L-Kyn) and L-3-hydroxykynurenine (L-3OHKyn) into anthranilic acid (AA) and 3-hydroxyanthranilic acid (3-OHAA), respectively. The sequence is that of Kynureninase 2 (kyn-2) from Neurospora crassa (strain ATCC 24698 / 74-OR23-1A / CBS 708.71 / DSM 1257 / FGSC 987).